Reading from the N-terminus, the 273-residue chain is Zinc finger protein AZF2 (273 aa).

The disordered stretch occupies residues 33–64 (LKRKRSKRQRSHSPSSSSSSPPRSRPKSQNQD). Residues 34–43 (KRKRSKRQRS) show a composition bias toward basic residues. Low complexity predominate over residues 44 to 54 (HSPSSSSSSPP). 2 consecutive C2H2-type zinc fingers follow at residues 106–128 (YKCNVCEKAFPSYQALGGHKASH) and 165–187 (HECSICHKVFPTGQALGGHKRCH). The disordered stretch occupies residues 195–215 (GGGGGSKSISHSGSVSSTVSE). Over residues 201-213 (KSISHSGSVSSTV) the composition is skewed to low complexity.

Expressed in roots, radicles, cotyledons, hypocotyls, leaf veins, stems, sepals, petals, stamens, placenta, funiculi and maturated seeds.

It localises to the nucleus. Transcriptional repressor involved in the inhibition of plant growth under abiotic stress conditions. Can repress the expression of various genes, including osmotic stress and abscisic acid-repressive genes and auxin-inducible genes, by binding to their promoter regions in a DNA sequence-specific manner. Acts as a negative regulator of abscisic acid (ABA) signaling during seed germination. Probably involved in jasmonate (JA) early signaling response. May regulate the expression of the JA biosynthesis gene LOX3 and control the expression of TIFY10A/JAZ1, a key repressor in the JA signaling cascade. May act as a positive regulator of leaf senescence. Has been identified as a suppressor of the deficiency of yeast snf4 mutant to grow on non-fermentable carbon source. In Arabidopsis thaliana (Mouse-ear cress), this protein is Zinc finger protein AZF2 (AZF2).